An 88-amino-acid polypeptide reads, in one-letter code: MANTISAERRIRLTKKETAYNRYWRTTMKTYVKRAKKAIESGDREAAEAAVLKAQSVIDKVAVKGVIHKNEAARRKSRLMKLFNQKFQ.

It belongs to the bacterial ribosomal protein bS20 family.

In terms of biological role, binds directly to 16S ribosomal RNA. This is Small ribosomal subunit protein bS20 from Coprothermobacter proteolyticus (strain ATCC 35245 / DSM 5265 / OCM 4 / BT).